Consider the following 547-residue polypeptide: Sesterfisheric acid synthase (547 aa).

The chain crosses the membrane as a helical span at residues 19–39 (IMGCSLGTGLLVSMIIYNYFF). 2 N-linked (GlcNAc...) asparagine glycosylation sites follow: N341 and N404. C490 contacts heme.

It belongs to the cytochrome P450 family. Requires heme as cofactor.

Its subcellular location is the membrane. The enzyme catalyses sesterfisherol + 3 reduced [NADPH--hemoprotein reductase] + 3 O2 = sesterfisherate + 3 oxidized [NADPH--hemoprotein reductase] + 4 H2O + 4 H(+). Its pathway is secondary metabolite biosynthesis; terpenoid biosynthesis. Its function is as follows. Cytochrome P450 monooxygenase; part of the gene cluster that mediates the biosynthesis of sesterfisheric acid. The bifunctional terpene synthase NfSS converts DMAPP and IPP, and also GGPP, into sesterfisherol. The C-terminal prenyltransferase (PT) domain of NfSS catalyzes formation of GFPP, whereas the N-terminal terpene cyclase (TC) domain catalyzes the cyclization of GFPP to sesterfisherol. The cytochrome P450 monooxygenase NfP450 then catalyzes oxidative modifications of sesterfisherol into sesterfisheric acid. This is Sesterfisheric acid synthase from Neosartorya fischeri (strain ATCC 1020 / DSM 3700 / CBS 544.65 / FGSC A1164 / JCM 1740 / NRRL 181 / WB 181) (Aspergillus fischerianus).